The sequence spans 156 residues: Cytochrome c-type biogenesis protein CcmE (156 aa).

The Cytoplasmic portion of the chain corresponds to 1–16 (MNATKAPGGIKPKHQR). Residues 17–37 (LVLLVIALVALIGAGLLAAYA) form a helical; Signal-anchor for type II membrane protein membrane-spanning segment. Residues 38-156 (LSNQASYFYV…QAEAVVAETK (119 aa)) lie on the Periplasmic side of the membrane. 2 residues coordinate heme: His131 and Tyr135.

It belongs to the CcmE/CycJ family.

The protein localises to the cell inner membrane. In terms of biological role, heme chaperone required for the biogenesis of c-type cytochromes. Transiently binds heme delivered by CcmC and transfers the heme to apo-cytochromes in a process facilitated by CcmF and CcmH. This Novosphingobium aromaticivorans (strain ATCC 700278 / DSM 12444 / CCUG 56034 / CIP 105152 / NBRC 16084 / F199) protein is Cytochrome c-type biogenesis protein CcmE.